Reading from the N-terminus, the 338-residue chain is Protein FosB (338 aa).

Disordered stretches follow at residues 1–54 (MFQA…PGSF), 79–191 (MAQS…DQLE), 222–276 (CKIP…PPNL), and 316–338 (GAQRTSGSDQPSDPLNSPSLLAL). Composition is skewed to polar residues over residues 13–31 (SRCSSSPSAESQYLSSVDS) and 79–88 (MAQSQGQPLA). Residue serine 27 is modified to Phosphoserine. Residues 113–124 (SSGGASGSGGPS) are compositionally biased toward gly residues. Residues 125–137 (TSGTTSGPGPARP) show a composition bias toward low complexity. The 64-residue stretch at 155–218 (EEKRRVRRER…ERLEFVLVAH (64 aa)) folds into the bZIP domain. The segment at 157 to 182 (KRRVRRERNKLAAAKCRNRRRELTDR) is basic motif. Residues 183-211 (LQAETDQLEEEKAELESEIAELQKEKERL) form a leucine-zipper region. Residues 256–265 (LPPPPPPPLP) show a composition bias toward pro residues. Composition is skewed to polar residues over residues 266 to 276 (FQTSQDAPPNL) and 318 to 338 (QRTSGSDQPSDPLNSPSLLAL).

This sequence belongs to the bZIP family. Fos subfamily. In terms of assembly, heterodimer; binds to DNA as heterodimer. Component of an AP-1 transcription factor complex; composed of FOS-JUN heterodimers. As part of the AP-1 transcription factor complex, forms heterodimers with JUN, JUNB or JUND, thereby binding to the AP-1 consensus sequence and stimulating transcription. Interacts with the BAF multiprotein chromatin-remodeling complex subunits SMARCB1 and SMARCD1. Interacts with ARID1A and JUN. As to quaternary structure, homodimer under oxidizing conditions and monomer under reducing conditions (in vitro). Heterodimer; binds to DNA as heterodimer. Forms heterodimers with JUNB, JUN or JUND; thereby binding to the AP-1 consensus sequence but does not stimulate transcription. Forms heterodimers with JUND under oxidizing conditions. In terms of processing, phosphorylated. Phosphorylated at Ser-27 by CSNK2A1; phosphorylation increases protein stability and transactivation potential. As to expression, expressed in the nucleus accumbens of the striatum (at protein level).

The protein localises to the nucleus. Functionally, heterodimerizes with proteins of the JUN family to form an AP-1 transcription factor complex, thereby enhancing their DNA binding activity to gene promoters containing an AP-1 consensus sequence 5'-TGA[GC]TCA-3' and enhancing their transcriptional activity. As part of the AP-1 complex, facilitates enhancer selection together with cell-type-specific transcription factors by collaboratively binding to nucleosomal enhancers and recruiting the SWI/SNF (BAF) chromatin remodeling complex to establish accessible chromatin. Together with JUN, plays a role in activation-induced cell death of T cells by binding to the AP-1 promoter site of FASLG/CD95L, and inducing its transcription in response to activation of the TCR/CD3 signaling pathway. Exhibits transactivation activity in vitro. Involved in the display of nurturing behavior towards newborns. May play a role in neurogenesis in the hippocampus and in learning and memory-related tasks by regulating the expression of various genes involved in neurogenesis, depression and epilepsy. Implicated in behavioral responses related to morphine reward and spatial memory. Exhibits lower transactivation activity than isoform 1 in vitro. The heterodimer with JUN does not display any transcriptional activity, and may thereby act as an transcriptional inhibitor. May be involved in the regulation of neurogenesis in the hippocampus. May play a role in synaptic modifications in nucleus accumbens medium spiny neurons and thereby play a role in adaptive and pathological reward-dependent learning, including maladaptive responses involved in drug addiction. Seems to be more stably expressed with a half-life of ~9.5 hours in cell culture as compared to 1.5 hours half-life of isoform 1. In Homo sapiens (Human), this protein is Protein FosB (FOSB).